Here is a 524-residue protein sequence, read N- to C-terminus: Peptide chain release factor 3 (524 aa).

One can recognise a tr-type G domain in the interval 9–275 (SRRRTFAIIS…AVVDLSPPPI (267 aa)). GTP is bound by residues 18 to 25 (SHPDAGKT), 86 to 90 (DTPGH), and 140 to 143 (NKLD).

The protein belongs to the TRAFAC class translation factor GTPase superfamily. Classic translation factor GTPase family. PrfC subfamily.

The protein resides in the cytoplasm. Functionally, increases the formation of ribosomal termination complexes and stimulates activities of RF-1 and RF-2. It binds guanine nucleotides and has strong preference for UGA stop codons. It may interact directly with the ribosome. The stimulation of RF-1 and RF-2 is significantly reduced by GTP and GDP, but not by GMP. This is Peptide chain release factor 3 from Dechloromonas aromatica (strain RCB).